Consider the following 208-residue polypeptide: Pyridoxine/pyridoxamine 5'-phosphate oxidase (208 aa).

Residues 55–60 (RMVLLK), 70–71 (YT), K76, K77, and Q99 each bind FMN. Substrate is bound at residue K60. Residues Y117, R121, and S125 each contribute to the substrate site. FMN-binding positions include 134–135 (QS) and W179. Residue 185 to 187 (RLH) coordinates substrate. R189 is an FMN binding site.

It belongs to the pyridoxamine 5'-phosphate oxidase family. Homodimer. FMN serves as cofactor.

The enzyme catalyses pyridoxamine 5'-phosphate + O2 + H2O = pyridoxal 5'-phosphate + H2O2 + NH4(+). It catalyses the reaction pyridoxine 5'-phosphate + O2 = pyridoxal 5'-phosphate + H2O2. It participates in cofactor metabolism; pyridoxal 5'-phosphate salvage; pyridoxal 5'-phosphate from pyridoxamine 5'-phosphate: step 1/1. The protein operates within cofactor metabolism; pyridoxal 5'-phosphate salvage; pyridoxal 5'-phosphate from pyridoxine 5'-phosphate: step 1/1. In terms of biological role, catalyzes the oxidation of either pyridoxine 5'-phosphate (PNP) or pyridoxamine 5'-phosphate (PMP) into pyridoxal 5'-phosphate (PLP). This chain is Pyridoxine/pyridoxamine 5'-phosphate oxidase, found in Brucella ovis (strain ATCC 25840 / 63/290 / NCTC 10512).